The following is a 333-amino-acid chain: Aspartate carbamoyltransferase catalytic subunit (333 aa).

Residues arginine 61 and threonine 62 each contribute to the carbamoyl phosphate site. Lysine 89 lines the L-aspartate pocket. Residues arginine 111, histidine 144, and glutamine 147 each coordinate carbamoyl phosphate. Positions 184 and 248 each coordinate L-aspartate. Glycine 289 and proline 290 together coordinate carbamoyl phosphate.

This sequence belongs to the aspartate/ornithine carbamoyltransferase superfamily. ATCase family. In terms of assembly, heterododecamer (2C3:3R2) of six catalytic PyrB chains organized as two trimers (C3), and six regulatory PyrI chains organized as three dimers (R2).

It carries out the reaction carbamoyl phosphate + L-aspartate = N-carbamoyl-L-aspartate + phosphate + H(+). The protein operates within pyrimidine metabolism; UMP biosynthesis via de novo pathway; (S)-dihydroorotate from bicarbonate: step 2/3. Functionally, catalyzes the condensation of carbamoyl phosphate and aspartate to form carbamoyl aspartate and inorganic phosphate, the committed step in the de novo pyrimidine nucleotide biosynthesis pathway. This is Aspartate carbamoyltransferase catalytic subunit from Trichormus variabilis (strain ATCC 29413 / PCC 7937) (Anabaena variabilis).